Consider the following 414-residue polypeptide: Probable protein phosphatase 2C 9 (414 aa).

Residues 15–37 (TATAAVAAAVSASAAAAVSSAID) traverse the membrane as a helical segment. The interval 56–95 (LQAGEDGRPGKRQRLARTASGAPRPDEDSASERPSCGRTE) is disordered. Residues 99-410 (RYGVTAVCGR…DNVSVVVVDL (312 aa)) form the PPM-type phosphatase domain. Residues Asp-136 and Gly-137 each contribute to the Mn(2+) site. Residues 186–195 (GNRASTRSDD) show a composition bias toward basic and acidic residues. Residues 186–212 (GNRASTRSDDEPACPCEQQTPSRRDHA) form a disordered region. Mn(2+) is bound at residue Asp-319. The segment at 345 to 372 (APAARPSGVPSSAEAAETENGGAASVKG) is disordered. The span at 355 to 369 (SSAEAAETENGGAAS) shows a compositional bias: low complexity. Asp-401 contacts Mn(2+).

The protein belongs to the PP2C family. Requires Mg(2+) as cofactor. Mn(2+) is required as a cofactor.

The protein resides in the membrane. It carries out the reaction O-phospho-L-seryl-[protein] + H2O = L-seryl-[protein] + phosphate. It catalyses the reaction O-phospho-L-threonyl-[protein] + H2O = L-threonyl-[protein] + phosphate. This chain is Probable protein phosphatase 2C 9, found in Oryza sativa subsp. japonica (Rice).